Reading from the N-terminus, the 425-residue chain is Ribonuclease T2-like (425 aa).

The N-terminal stretch at 1–18 is a signal peptide; the sequence is MLLNKGLLASLLAYTTTA. Disulfide bonds link C32-C51, C40-C99, C50-C175, C107-C167, and C245-C281. A glycan (N-linked (GlcNAc...) asparagine) is linked at N42. H92 is a catalytic residue. An N-linked (GlcNAc...) asparagine glycan is attached at N134. Active-site residues include E160 and H164.

It belongs to the RNase T2 family.

It is found in the vacuole lumen. It localises to the cytoplasm. The catalysed reaction is a ribonucleotidyl-ribonucleotide-RNA + H2O = a 3'-end 3'-phospho-ribonucleotide-RNA + a 5'-end dephospho-ribonucleoside-RNA + H(+). Functionally, rnase which modulates cell survival under stress conditions. Released from the vacuole to the cytoplasm during stress to promote tRNA and rRNA cleavage and to activate separately a downstream pathway that promotes cell death. Involved in cell size, vacuolar morphology and growth at high temperatures and high salt concentration. The sequence is that of Ribonuclease T2-like (RNY1) from Kluyveromyces lactis (strain ATCC 8585 / CBS 2359 / DSM 70799 / NBRC 1267 / NRRL Y-1140 / WM37) (Yeast).